A 393-amino-acid chain; its full sequence is Protein TsgA (393 aa).

12 consecutive transmembrane segments (helical) span residues Trp-11–Met-31, Phe-51–Pro-71, Phe-78–Leu-98, Thr-101–Ile-121, Phe-140–Ile-160, Trp-162–Gly-182, Ile-206–Ile-226, Thr-245–Leu-265, Ile-273–Pro-293, Ala-297–Leu-317, Phe-332–Val-352, and Leu-361–Val-381.

The protein belongs to the major facilitator superfamily. TsgA family.

The protein resides in the cell inner membrane. The chain is Protein TsgA from Shigella boydii serotype 18 (strain CDC 3083-94 / BS512).